Consider the following 118-residue polypeptide: Hydrogenase maturation factor HypA (118 aa).

Ni(2+) is bound at residue His2. Residues Cys73, Cys76, Cys90, and Cys93 each contribute to the Zn(2+) site.

It belongs to the HypA/HybF family.

Its function is as follows. Involved in the maturation of [NiFe] hydrogenases. Required for nickel insertion into the metal center of the hydrogenase. This chain is Hydrogenase maturation factor HypA, found in Salmonella typhi.